The sequence spans 391 residues: MDPSPLLALLLLLGAARALSTCQRLDLEAAKKKRIEAVRGQILSKLRLTAPPPASETPPRPLPDDVRALYNSTQELLKQRARLRPPPDGPDEYWAKELRRIPMETTWDGPMEHWQPQSHSIFFVFNVSRVRAEVGGRALLHRAELRMLRQKAAADSAGTEQRLELYQGYGNASWRYLHGRSVRATADDEWLSFDVTDAVHQWLSGSELLGVFKLSVHCPCEMGPGHADEMRISIEGFEQQRGDMQSIAKKHRRVPYVLAMALPAERANELHSARRRRDLDTDYCFGPGTDEKNCCVRPLYIDFRKDLQWKWIHEPKGYMANFCMGPCPYIWSADTQYTKVLALYNQHNPGASAAPCCVPQTLDPLPIIYYVGRNVRVEQLSNMVVRACKCS.

The N-terminal stretch at 1-18 is a signal peptide; the sequence is MDPSPLLALLLLLGAARA. The segment at 19–63 is straightjacket domain; the sequence is LSTCQRLDLEAAKKKRIEAVRGQILSKLRLTAPPPASETPPRPLP. The interval 64-270 is arm domain; it reads DDVRALYNST…ALPAERANEL (207 aa). Residues Asn71, Asn126, and Asn171 are each glycosylated (N-linked (GlcNAc...) asparagine). The bowtie tail stretch occupies residues 221 to 249; the sequence is EMGPGHADEMRISIEGFEQQRGDMQSIAK. The short motif at 241–243 is the Cell attachment site element; it reads RGD. 4 disulfide bridges follow: Cys284-Cys295, Cys294-Cys357, Cys323-Cys388, and Cys327-Cys390.

This sequence belongs to the TGF-beta family. Latency-associated peptide: Homodimer; disulfide-linked. Latency-associated peptide: Interacts with Transforming growth factor beta-1 (TGF-beta-1) chain; interaction is non-covalent and maintains (TGF-beta-1) in a latent state; each Latency-associated peptide (LAP) monomer interacts with TGF-beta-1 in the other monomer. Transforming growth factor beta-1: Homodimer; disulfide-linked. Transforming growth factor beta-1: Interacts with TGF-beta receptors (TGFBR1 and TGFBR2), leading to signal transduction. Post-translationally, transforming growth factor beta-1 proprotein: The precursor proprotein is cleaved in the Golgi apparatus to form Transforming growth factor beta-1 (TGF-beta-1) and Latency-associated peptide (LAP) chains, which remain non-covalently linked, rendering TGF-beta-1 inactive.

It localises to the secreted. Its subcellular location is the extracellular space. It is found in the extracellular matrix. Functionally, transforming growth factor beta-1 proprotein: Precursor of the Latency-associated peptide (LAP) and Transforming growth factor beta-1 (TGF-beta-1) chains, which constitute the regulatory and active subunit of TGF-beta-1, respectively. Required to maintain the Transforming growth factor beta-1 (TGF-beta-1) chain in a latent state during storage in extracellular matrix. Associates non-covalently with TGF-beta-1 and regulates its activation via interaction with 'milieu molecules', such as LTBP1, LRRC32/GARP and LRRC33/NRROS, that control activation of TGF-beta-1. Interaction with integrins (ITGAV:ITGB6 or ITGAV:ITGB8) results in distortion of the Latency-associated peptide chain and subsequent release of the active TGF-beta-1. In terms of biological role, transforming growth factor beta-1: Multifunctional protein that regulates the growth and differentiation of various cell types and is involved in various processes, such as normal development, immune function, microglia function and responses to neurodegeneration. Activation into mature form follows different steps: following cleavage of the proprotein in the Golgi apparatus, Latency-associated peptide (LAP) and Transforming growth factor beta-1 (TGF-beta-1) chains remain non-covalently linked rendering TGF-beta-1 inactive during storage in extracellular matrix. At the same time, LAP chain interacts with 'milieu molecules', such as LTBP1, LRRC32/GARP and LRRC33/NRROS that control activation of TGF-beta-1 and maintain it in a latent state during storage in extracellular milieus. TGF-beta-1 is released from LAP by integrins (ITGAV:ITGB6 or ITGAV:ITGB8): integrin-binding to LAP stabilizes an alternative conformation of the LAP bowtie tail and results in distortion of the LAP chain and subsequent release of the active TGF-beta-1. Once activated following release of LAP, TGF-beta-1 acts by binding to TGF-beta receptors (TGFBR1 and TGFBR2), which transduce signal. While expressed by many cells types, TGF-beta-1 only has a very localized range of action within cell environment thanks to fine regulation of its activation by Latency-associated peptide chain (LAP) and 'milieu molecules'. Plays an important role in bone remodeling: acts as a potent stimulator of osteoblastic bone formation. Can promote either T-helper 17 cells (Th17) or regulatory T-cells (Treg) lineage differentiation in a concentration-dependent manner. Can induce epithelial-to-mesenchymal transition (EMT) and cell migration in various cell types. This Gallus gallus (Chicken) protein is Transforming growth factor beta-1 proprotein (TGFB1).